Here is a 900-residue protein sequence, read N- to C-terminus: Phosphoenolpyruvate carboxylase (900 aa).

Residues histidine 140 and lysine 568 contribute to the active site.

The protein belongs to the PEPCase type 1 family. Requires Mg(2+) as cofactor.

The catalysed reaction is oxaloacetate + phosphate = phosphoenolpyruvate + hydrogencarbonate. Forms oxaloacetate, a four-carbon dicarboxylic acid source for the tricarboxylic acid cycle. This Neisseria meningitidis serogroup C / serotype 2a (strain ATCC 700532 / DSM 15464 / FAM18) protein is Phosphoenolpyruvate carboxylase.